Here is a 504-residue protein sequence, read N- to C-terminus: ATP synthase subunit alpha 2 (504 aa).

169–176 (GDRQTGKT) serves as a coordination point for ATP.

It belongs to the ATPase alpha/beta chains family. As to quaternary structure, F-type ATPases have 2 components, CF(1) - the catalytic core - and CF(0) - the membrane proton channel. CF(1) has five subunits: alpha(3), beta(3), gamma(1), delta(1), epsilon(1). CF(0) has three main subunits: a(1), b(2) and c(9-12). The alpha and beta chains form an alternating ring which encloses part of the gamma chain. CF(1) is attached to CF(0) by a central stalk formed by the gamma and epsilon chains, while a peripheral stalk is formed by the delta and b chains.

The protein localises to the cell membrane. It carries out the reaction ATP + H2O + 4 H(+)(in) = ADP + phosphate + 5 H(+)(out). Its function is as follows. Produces ATP from ADP in the presence of a proton gradient across the membrane. The alpha chain is a regulatory subunit. In Listeria monocytogenes serotype 4b (strain F2365), this protein is ATP synthase subunit alpha 2.